The following is a 544-amino-acid chain: Cytochrome P450 82A1 (544 aa).

Residue Cys481 coordinates heme.

This sequence belongs to the cytochrome P450 family. Requires heme as cofactor.

It localises to the membrane. This Pisum sativum (Garden pea) protein is Cytochrome P450 82A1 (CYP82A1).